A 551-amino-acid polypeptide reads, in one-letter code: Hyaluronan synthase 2 (551 aa).

The Cytoplasmic portion of the chain corresponds to 1–11 (MHCERFICILR). Residues 12–32 (IIGTTLFGVSLLLGISAAYIV) traverse the membrane as a helical segment. Over 33 to 45 (GYQFIQTDNYYFS) the chain is Extracellular. A helical transmembrane segment spans residues 46 to 66 (FGLYGAILALHLIIQSLFAFL). Residues 67 to 374 (EHRKMKRSLE…NSLWFHKHHL (308 aa)) are Cytoplasmic-facing. Residues 375–395 (WMTYEAVITGFFPFFLIATVI) traverse the membrane as a helical segment. Topologically, residues 396-402 (QLFYRGR) are extracellular. Residues 403-423 (IWNILLFLLTVQLVGLIKSSF) traverse the membrane as a helical segment. The Cytoplasmic portion of the chain corresponds to 424–429 (ASALRG). A helical membrane pass occupies residues 430–450 (NIVMVFMSFYSVLYMSSLLPA). Residues 451–470 (KMFAIATINKAGWGTSGRKT) are Extracellular-facing. Residues 471-491 (IVVNFIGLIPITVWFTILLGG) form a helical membrane-spanning segment. Over 492–509 (VCYTIWRETKKPFSESEK) the chain is Cytoplasmic. Residues 510-530 (IVLAVGAILYACYWVMLLTMY) form a helical membrane-spanning segment. Residues 531–551 (VSLVMKCGRRRKEPQHDLVLA) lie on the Extracellular side of the membrane.

The protein belongs to the NodC/HAS family. In terms of assembly, homodimer; dimerization promotes enzymatic activity. Mg(2+) is required as a cofactor.

It localises to the cell membrane. It is found in the endoplasmic reticulum membrane. Its subcellular location is the vesicle. The protein resides in the golgi apparatus membrane. The protein localises to the lysosome. It carries out the reaction [hyaluronan](n) + UDP-N-acetyl-alpha-D-glucosamine = N-acetyl-beta-D-glucosaminyl-(1-&gt;4)-[hyaluronan](n) + UDP + H(+). It catalyses the reaction N-acetyl-beta-D-glucosaminyl-(1-&gt;4)-[hyaluronan](n) + UDP-alpha-D-glucuronate = [hyaluronan](n+1) + UDP + H(+). Its pathway is glycan biosynthesis; hyaluronan biosynthesis. Its function is as follows. Catalyzes the addition of GlcNAc or GlcUA monosaccharides to the nascent hyaluronan polymer. Therefore, it is essential to hyaluronan synthesis a major component of most extracellular matrices that has a structural role in tissues architectures and regulates cell adhesion, migration and differentiation. This is one of three isoenzymes responsible for cellular hyaluronan synthesis and it is particularly responsible for the synthesis of high molecular mass hyaluronan. The protein is Hyaluronan synthase 2 (has2) of Xenopus laevis (African clawed frog).